The following is a 288-amino-acid chain: 4-diphosphocytidyl-2-C-methyl-D-erythritol kinase (288 aa).

Residue lysine 10 is part of the active site. 94 to 104 (PVAAGLGGGSS) lines the ATP pocket. Residue aspartate 136 is part of the active site.

Belongs to the GHMP kinase family. IspE subfamily.

It carries out the reaction 4-CDP-2-C-methyl-D-erythritol + ATP = 4-CDP-2-C-methyl-D-erythritol 2-phosphate + ADP + H(+). It functions in the pathway isoprenoid biosynthesis; isopentenyl diphosphate biosynthesis via DXP pathway; isopentenyl diphosphate from 1-deoxy-D-xylulose 5-phosphate: step 3/6. In terms of biological role, catalyzes the phosphorylation of the position 2 hydroxy group of 4-diphosphocytidyl-2C-methyl-D-erythritol. The protein is 4-diphosphocytidyl-2-C-methyl-D-erythritol kinase of Lactiplantibacillus plantarum (strain ATCC BAA-793 / NCIMB 8826 / WCFS1) (Lactobacillus plantarum).